Reading from the N-terminus, the 254-residue chain is Allene oxide cyclase 1, chloroplastic (254 aa).

Residues 1 to 78 (MASSTISLQS…QNLGNTENPR (78 aa)) constitute a chloroplast transit peptide. Positions 44-56 (SNGPGSSSPTSFT) are enriched in low complexity. The tract at residues 44–79 (SNGPGSSSPTSFTPKKKLTPTRALSQNLGNTENPRP) is disordered. Residues 65-77 (RALSQNLGNTENP) are compositionally biased toward polar residues.

Belongs to the allene oxide cyclase family. As to expression, highly expressed in fully developed leaves.

It is found in the plastid. The protein localises to the chloroplast. The catalysed reaction is (9Z,13S,15Z)-12,13-epoxyoctadeca-9,11,15-trienoate = (9S,13S,15Z)-12-oxophyto-10,15-dienoate. Functionally, involved in the production of 12-oxo-phytodienoic acid (OPDA), a precursor of jasmonic acid. The sequence is that of Allene oxide cyclase 1, chloroplastic (AOC1) from Arabidopsis thaliana (Mouse-ear cress).